The chain runs to 103 residues: uncharacterized protein (103 aa).

This is an uncharacterized protein from Dictyostelium discoideum (Social amoeba).